Reading from the N-terminus, the 202-residue chain is Coiled-coil domain-containing protein 85B (202 aa).

Position 1 is an N-acetylmethionine (methionine 1). Coiled coils occupy residues 43-90 and 118-147; these read GRLM…ERQR and QKLA…LGEE. Residues 148 to 202 are disordered; that stretch reads WGPRGGPSGAGGSGAGPAPELALPPCGPRDLGDGSSSTGSVGSPDQLPLACSPDD. Positions 150 to 162 are enriched in gly residues; it reads PRGGPSGAGGSGA. The span at 180–190 shows a compositional bias: low complexity; it reads DGSSSTGSVGS.

The protein belongs to the CCDC85 family. Interacts with CEBPB. Interacts with EURL. May interact with CEBPD. Interacts with MCRS1. Interacts with TCF7L2; competes with CTNNB1. Interacts with ANKRD26. Interacts with the beta-catenin family proteins ARVCF, CTNND1, CTNND2 and PKP4. In terms of assembly, (Microbial infection) Interacts with the viral phosphoprotein hepatitis delta antigen (HDAG); this interaction affects hepatitis delta virus (HDV) genomic replication in intact cells. Widely expressed including liver.

It localises to the nucleus. Its subcellular location is the cytoplasm. The protein resides in the cytoskeleton. The protein localises to the microtubule organizing center. It is found in the centrosome. It localises to the cell junction. Its subcellular location is the adherens junction. Functionally, functions as a transcriptional repressor. May inhibit the activity of CTNNB1 in a TP53-dependent manner and thus regulate cell growth. May function in adipocyte differentiation, negatively regulating mitotic clonal expansion. Plays a role in cell-cell adhesion and epithelium development through its interaction with proteins of the beta-catenin family. Its function is as follows. (Microbial infection) Plays a role in hepatitis delta virus (HDV) genomic replication. The protein is Coiled-coil domain-containing protein 85B (CCDC85B) of Homo sapiens (Human).